The primary structure comprises 508 residues: Amphoterin-induced protein 3 (508 aa).

The first 19 residues, 1–19 (MAWLVLSGILLCMLGAGLG), serve as a signal peptide directing secretion. Residues 20 to 383 (TSDLEDVLPP…ARPEPETFNT (364 aa)) are Extracellular-facing. An LRRNT domain is found at 25–61 (DVLPPAPHNCPDICICAADVLSCAGRGLQDLPVALPT). 2 disulfides stabilise this stretch: cysteine 34/cysteine 40 and cysteine 38/cysteine 47. LRR repeat units lie at residues 62-83 (TAAE…WLAP), 86-107 (RLRA…AFTN), 110-133 (GLRT…DGLE), 134-155 (ELEK…AFQG), 158-178 (MLSH…NHLH), and 184-207 (RLRT…AALP). A glycan (N-linked (GlcNAc...) asparagine) is linked at asparagine 107. The N-linked (GlcNAc...) asparagine glycan is linked to asparagine 142. In terms of domain architecture, LRRCT spans 219 to 275 (NPLPCDCSLYHLLRRWHQRGLSALHDFEREYTCLVFKVSESRVRFFEHSRVFKNCSV). 3 cysteine pairs are disulfide-bonded: cysteine 223–cysteine 251, cysteine 225–cysteine 273, and cysteine 300–cysteine 352. N-linked (GlcNAc...) asparagine glycosylation is found at asparagine 272, asparagine 301, asparagine 362, and asparagine 368. The 92-residue stretch at 279–370 (PGLELPEEQL…HNQTLEYNVS (92 aa)) folds into the Ig-like C2-type domain. Residues 384–404 (GFTTLLGCIVGLVLVLLYLFA) form a helical membrane-spanning segment. The Cytoplasmic portion of the chain corresponds to 405 to 508 (PPCRGCCHCC…STGSEGLVMS (104 aa)).

It belongs to the immunoglobulin superfamily. AMIGO family. Binds AMIGO1 or AMIGO2. Ubiquitous.

It localises to the membrane. May mediate heterophilic cell-cell interaction. May contribute to signal transduction through its intracellular domain. The protein is Amphoterin-induced protein 3 of Mus musculus (Mouse).